Here is a 268-residue protein sequence, read N- to C-terminus: uncharacterized protein (268 aa).

This is an uncharacterized protein from Metamycoplasma hominis (strain ATCC 23114 / DSM 25592 / NBRC 14850 / NCTC 10111 / PG21) (Mycoplasma hominis).